The chain runs to 1072 residues: Carbamoyl phosphate synthase large chain (1072 aa).

The segment at 1–401 is carboxyphosphate synthetic domain; it reads MPKRLDINTI…SLLKAVRSLE (401 aa). Residues R129, R169, G175, G176, K208, I210, E215, G241, V242, H243, Q284, and E298 each contribute to the ATP site. The 195-residue stretch at 133–327 folds into the ATP-grasp 1 domain; sequence RTLMQDLNEP…IAKLAAKIAV (195 aa). 3 residues coordinate Mg(2+): Q284, E298, and N300. 3 residues coordinate Mn(2+): Q284, E298, and N300. Positions 402-546 are oligomerization domain; that stretch reads LGIYHLELDH…YSTYADENES (145 aa). The tract at residues 547 to 929 is carbamoyl phosphate synthetic domain; that stretch reads IVTDRKSVVV…ALYKGLVASG (383 aa). The region spanning 671 to 861 is the ATP-grasp 2 domain; the sequence is EAALTKLGIP…MANVATKVIL (191 aa). ATP is bound by residues R707, R746, E752, G777, V778, H779, S780, Q820, and E832. The Mg(2+) site is built by Q820, E832, and N834. Residues Q820, E832, and N834 each coordinate Mn(2+). The MGS-like domain occupies 930-1072; sequence INIPTHGSVI…QTKRHEVVHA (143 aa). An allosteric domain region spans residues 930-1072; that stretch reads INIPTHGSVI…QTKRHEVVHA (143 aa).

The protein belongs to the CarB family. In terms of assembly, composed of two chains; the small (or glutamine) chain promotes the hydrolysis of glutamine to ammonia, which is used by the large (or ammonia) chain to synthesize carbamoyl phosphate. Tetramer of heterodimers (alpha,beta)4. Mg(2+) serves as cofactor. Requires Mn(2+) as cofactor.

It catalyses the reaction hydrogencarbonate + L-glutamine + 2 ATP + H2O = carbamoyl phosphate + L-glutamate + 2 ADP + phosphate + 2 H(+). The catalysed reaction is hydrogencarbonate + NH4(+) + 2 ATP = carbamoyl phosphate + 2 ADP + phosphate + 2 H(+). It participates in amino-acid biosynthesis; L-arginine biosynthesis; carbamoyl phosphate from bicarbonate: step 1/1. The protein operates within pyrimidine metabolism; UMP biosynthesis via de novo pathway; (S)-dihydroorotate from bicarbonate: step 1/3. Large subunit of the glutamine-dependent carbamoyl phosphate synthetase (CPSase). CPSase catalyzes the formation of carbamoyl phosphate from the ammonia moiety of glutamine, carbonate, and phosphate donated by ATP, constituting the first step of 2 biosynthetic pathways, one leading to arginine and/or urea and the other to pyrimidine nucleotides. The large subunit (synthetase) binds the substrates ammonia (free or transferred from glutamine from the small subunit), hydrogencarbonate and ATP and carries out an ATP-coupled ligase reaction, activating hydrogencarbonate by forming carboxy phosphate which reacts with ammonia to form carbamoyl phosphate. In Bacillus cereus (strain AH187), this protein is Carbamoyl phosphate synthase large chain.